Consider the following 212-residue polypeptide: Ropporin-1 (212 aa).

Residues 12 to 43 form the RIIa domain; it reads PELPELLKQFTKDAIRTQPPDLIQWAAEYFGA. Serine 56 is modified (phosphoserine). Residues 209–212 form an interaction with RHPN1 region; that stretch reads VRLE.

It belongs to the ropporin family. As to quaternary structure, homodimer. Interacts with AKAP3. May interact with SPA17. Interacts with RHPN1. Interacts with FSCB; the interaction increases upon spermatozoa capacitation conditions. Interacts with CFAP61. Post-translationally, sumoylated, sumoylation decreases upon spermatozoa capacitation conditions. Testis-specific. Present in the most inner parts of seminiferous tubules (at protein level).

The protein localises to the cell projection. The protein resides in the cilium. Its subcellular location is the flagellum. In terms of biological role, important for male fertility. With ROPN1L, involved in fibrous sheath integrity and sperm motility, plays a role in PKA-dependent signaling processes required for spermatozoa capacitation. This Mus musculus (Mouse) protein is Ropporin-1 (Ropn1).